The chain runs to 1178 residues: DNA-directed RNA polymerase subunit beta (1178 aa).

Residues 1–37 (MLEGCILPDFGQSKTDVSPSQSRPQSSPNNSVPGAPN) are disordered. Residues 17–33 (VSPSQSRPQSSPNNSVP) are compositionally biased toward low complexity.

Belongs to the RNA polymerase beta chain family. The RNAP catalytic core consists of 2 alpha, 1 beta, 1 beta' and 1 omega subunit. When a sigma factor is associated with the core the holoenzyme is formed, which can initiate transcription.

It catalyses the reaction RNA(n) + a ribonucleoside 5'-triphosphate = RNA(n+1) + diphosphate. Its function is as follows. DNA-dependent RNA polymerase catalyzes the transcription of DNA into RNA using the four ribonucleoside triphosphates as substrates. The chain is DNA-directed RNA polymerase subunit beta from Mycobacterium leprae (strain Br4923).